Reading from the N-terminus, the 488-residue chain is Pup--protein ligase (488 aa).

Glutamate 34 serves as a coordination point for Mg(2+). Residue arginine 77 coordinates ATP. Residue tyrosine 79 participates in Mg(2+) binding. Aspartate 81 serves as the catalytic Proton acceptor. Glutamate 87 is a binding site for Mg(2+). Residues threonine 90 and tryptophan 453 each coordinate ATP.

Belongs to the Pup ligase/Pup deamidase family. Pup-conjugating enzyme subfamily.

It carries out the reaction ATP + [prokaryotic ubiquitin-like protein]-L-glutamate + [protein]-L-lysine = ADP + phosphate + N(6)-([prokaryotic ubiquitin-like protein]-gamma-L-glutamyl)-[protein]-L-lysine.. It functions in the pathway protein degradation; proteasomal Pup-dependent pathway. The protein operates within protein modification; protein pupylation. Its function is as follows. Catalyzes the covalent attachment of the prokaryotic ubiquitin-like protein modifier Pup to the proteasomal substrate proteins, thereby targeting them for proteasomal degradation. This tagging system is termed pupylation. The ligation reaction involves the side-chain carboxylate of the C-terminal glutamate of Pup and the side-chain amino group of a substrate lysine. This chain is Pup--protein ligase, found in Bifidobacterium dentium (strain ATCC 27534 / DSM 20436 / JCM 1195 / Bd1).